A 391-amino-acid polypeptide reads, in one-letter code: S-adenosylmethionine synthase (391 aa).

The tract at residues 1–20 (MPRSDYLFTSESVSEGHPDK) is disordered. ATP is bound at residue His17. Asp19 provides a ligand contact to Mg(2+). Residue Glu45 participates in K(+) binding. Residues Glu58 and Gln102 each coordinate L-methionine. Positions 102 to 112 (QSADIAQGVDA) are flexible loop. ATP contacts are provided by residues 169 to 171 (DAK), 235 to 236 (KF), Asp244, 250 to 251 (RK), Ala267, and Lys271. Residue Asp244 coordinates L-methionine. Lys275 contacts L-methionine.

This sequence belongs to the AdoMet synthase family. As to quaternary structure, homotetramer; dimer of dimers. Mg(2+) is required as a cofactor. Requires K(+) as cofactor.

It localises to the cytoplasm. The catalysed reaction is L-methionine + ATP + H2O = S-adenosyl-L-methionine + phosphate + diphosphate. The protein operates within amino-acid biosynthesis; S-adenosyl-L-methionine biosynthesis; S-adenosyl-L-methionine from L-methionine: step 1/1. Functionally, catalyzes the formation of S-adenosylmethionine (AdoMet) from methionine and ATP. The overall synthetic reaction is composed of two sequential steps, AdoMet formation and the subsequent tripolyphosphate hydrolysis which occurs prior to release of AdoMet from the enzyme. The polypeptide is S-adenosylmethionine synthase (Methylorubrum populi (strain ATCC BAA-705 / NCIMB 13946 / BJ001) (Methylobacterium populi)).